A 459-amino-acid chain; its full sequence is Bifunctional protein GlmU (459 aa).

The pyrophosphorylase stretch occupies residues Met-1 to Arg-229. UDP-N-acetyl-alpha-D-glucosamine contacts are provided by residues Leu-8 to Gly-11, Lys-22, Gln-72, and Gly-77 to Thr-78. Asp-102 contacts Mg(2+). UDP-N-acetyl-alpha-D-glucosamine is bound by residues Gly-139, Glu-154, Asn-169, and Asn-227. A Mg(2+)-binding site is contributed by Asn-227. A linker region spans residues Val-230–Asn-250. The N-acetyltransferase stretch occupies residues Gly-251–Lys-459. 2 residues coordinate UDP-N-acetyl-alpha-D-glucosamine: Arg-332 and Lys-350. Residue His-362 is the Proton acceptor of the active site. UDP-N-acetyl-alpha-D-glucosamine is bound by residues Tyr-365 and Asn-376. Acetyl-CoA is bound by residues Ala-379, Asn-385 to Tyr-386, Ser-404, Ala-422, and Arg-439.

The protein in the N-terminal section; belongs to the N-acetylglucosamine-1-phosphate uridyltransferase family. This sequence in the C-terminal section; belongs to the transferase hexapeptide repeat family. In terms of assembly, homotrimer. The cofactor is Mg(2+).

It localises to the cytoplasm. It carries out the reaction alpha-D-glucosamine 1-phosphate + acetyl-CoA = N-acetyl-alpha-D-glucosamine 1-phosphate + CoA + H(+). The catalysed reaction is N-acetyl-alpha-D-glucosamine 1-phosphate + UTP + H(+) = UDP-N-acetyl-alpha-D-glucosamine + diphosphate. Its pathway is nucleotide-sugar biosynthesis; UDP-N-acetyl-alpha-D-glucosamine biosynthesis; N-acetyl-alpha-D-glucosamine 1-phosphate from alpha-D-glucosamine 6-phosphate (route II): step 2/2. It functions in the pathway nucleotide-sugar biosynthesis; UDP-N-acetyl-alpha-D-glucosamine biosynthesis; UDP-N-acetyl-alpha-D-glucosamine from N-acetyl-alpha-D-glucosamine 1-phosphate: step 1/1. The protein operates within bacterial outer membrane biogenesis; LPS lipid A biosynthesis. In terms of biological role, catalyzes the last two sequential reactions in the de novo biosynthetic pathway for UDP-N-acetylglucosamine (UDP-GlcNAc). The C-terminal domain catalyzes the transfer of acetyl group from acetyl coenzyme A to glucosamine-1-phosphate (GlcN-1-P) to produce N-acetylglucosamine-1-phosphate (GlcNAc-1-P), which is converted into UDP-GlcNAc by the transfer of uridine 5-monophosphate (from uridine 5-triphosphate), a reaction catalyzed by the N-terminal domain. This chain is Bifunctional protein GlmU, found in Streptococcus sanguinis (strain SK36).